Consider the following 391-residue polypeptide: MLQTKTDPMVISMGPHHPSMHGVLRLIVTLDGENVIDCEPVLGYLHRAMEKIAENRTIVQYLPYVTRWDYLATMFTEAITVNAPEKLANIEVPKRASYIRVIMLELSRIASHLLWLGPFMADIGAQTPFFYILREREMIYDLFEAATGMRMMHNYFRIGGVASDLPYGWVDKCLDFSDYFLPKVDEYERLITNNPIFLKRVRDVGFISREEAINWGLSGPMLRASGVQWDLRKVDNYECYGELDWNVQWQSDGDCLARYLVRLGEMRESTKIIQQALKAIPGGPYENLEARRLSKGRKSEWNNFEYQFVGKKPSPTFKIPKQEHYVRVEAPKGELGVFLMGDDNVFPWRWKIRSPGFINVQILPELVRGMKLADIMTILGSIDIIMGEVDR.

The protein belongs to the complex I 49 kDa subunit family. NDH is composed of at least 16 different subunits, 5 of which are encoded in the nucleus.

It localises to the plastid. The protein localises to the chloroplast thylakoid membrane. The catalysed reaction is a plastoquinone + NADH + (n+1) H(+)(in) = a plastoquinol + NAD(+) + n H(+)(out). It carries out the reaction a plastoquinone + NADPH + (n+1) H(+)(in) = a plastoquinol + NADP(+) + n H(+)(out). In terms of biological role, NDH shuttles electrons from NAD(P)H:plastoquinone, via FMN and iron-sulfur (Fe-S) centers, to quinones in the photosynthetic chain and possibly in a chloroplast respiratory chain. The immediate electron acceptor for the enzyme in this species is believed to be plastoquinone. Couples the redox reaction to proton translocation, and thus conserves the redox energy in a proton gradient. The chain is NAD(P)H-quinone oxidoreductase subunit H, chloroplastic from Mesostigma viride (Green alga).